Reading from the N-terminus, the 480-residue chain is Pyruvate kinase II (480 aa).

Substrate is bound at residue Arg-36. The K(+) site is built by Asn-38, Ser-40, and Asp-70. 38-41 (NFSH) provides a ligand contact to ATP. Positions 77 and 160 each coordinate ATP. Position 223 (Lys-223) interacts with substrate. Mg(2+) is bound at residue Glu-225. Positions 251, 252, and 284 each coordinate substrate. Asp-252 contacts Mg(2+).

It belongs to the pyruvate kinase family. In terms of assembly, homotetramer. Requires Mg(2+) as cofactor. The cofactor is K(+).

The enzyme catalyses pyruvate + ATP = phosphoenolpyruvate + ADP + H(+). It functions in the pathway carbohydrate degradation; glycolysis; pyruvate from D-glyceraldehyde 3-phosphate: step 5/5. Allosterically activated by AMP and by several sugar phosphates. Belongs to type II PK. In terms of biological role, catalyzes the formation of pyruvate in the last step of glycolysis, it is irreversible under physiological conditions. The reaction is critical for the control of metabolic flux in the second part of glycolysis. The protein is Pyruvate kinase II (pykA) of Salmonella typhimurium (strain LT2 / SGSC1412 / ATCC 700720).